The sequence spans 244 residues: Mitophagy receptor atg43 (244 aa).

Residues 1-24 are disordered; sequence MSSESKGIPIPRSDSNKTSDVSSW. Residues 1 to 198 lie on the Cytoplasmic side of the membrane; sequence MSSESKGIPI…LVALITLRDH (198 aa). An atg8 interacting motif (AIM) motif is present at residues 28–31; it reads YELI. A disordered region spans residues 105–131; sequence SLSLLQSKEEDDSSNWETEDSESAVEE. Residues 113 to 131 show a composition bias toward acidic residues; it reads EEDDSSNWETEDSESAVEE. Positions 165-184 are involved in MIM complex binding. Required for normal vegetative cell population growth but is dispensable for mitophagy; it reads PPIPDLRFQQSYLQSIQRAN. A helical transmembrane segment spans residues 199 to 215; sequence VLYPFLSGGMWVFVRHI. The Mitochondrial intermembrane portion of the chain corresponds to 216–244; that stretch reads FQFLKLQEKGFHFGQSLRRNLGLFSTFKD.

Interacts (via N-terminal atg8 interacting motif) with atg8; the interaction is direct. Interacts with the mitochondrial outer import machinery (MIM) complex subunits mim1 and mim2.

It is found in the mitochondrion outer membrane. Its function is as follows. Mitophagy receptor that tethers atg8 to the mitochondrial outer membrane to promote selective autophagy. This Schizosaccharomyces pombe (strain 972 / ATCC 24843) (Fission yeast) protein is Mitophagy receptor atg43.